A 545-amino-acid polypeptide reads, in one-letter code: Chaperonin GroEL 2 (545 aa).

ATP-binding positions include 29–32 (TLGP), 86–90 (DGTTT), G413, 479–481 (NAA), and D495.

The protein belongs to the chaperonin (HSP60) family. As to quaternary structure, forms a cylinder of 14 subunits composed of two heptameric rings stacked back-to-back. Interacts with the co-chaperonin GroES.

It is found in the cytoplasm. It catalyses the reaction ATP + H2O + a folded polypeptide = ADP + phosphate + an unfolded polypeptide.. In terms of biological role, together with its co-chaperonin GroES, plays an essential role in assisting protein folding. The GroEL-GroES system forms a nano-cage that allows encapsulation of the non-native substrate proteins and provides a physical environment optimized to promote and accelerate protein folding. The polypeptide is Chaperonin GroEL 2 (Prochlorococcus marinus (strain AS9601)).